A 430-amino-acid chain; its full sequence is Gustatory receptor-like 43a (430 aa).

Residues 1-31 (MSTGSHSPEAMWSATNFRRHQRKPNQVLHRW) lie on the Cytoplasmic side of the membrane. A helical transmembrane segment spans residues 32 to 52 (FFKGSAWIIYAIACGLHFFKL). The Extracellular portion of the chain corresponds to 53 to 79 (HYNERTNQVEESQYHRIWSKIVVVLKV). Residues 80–100 (ILLASPYLQYFVLGLGIYIHI) form a helical membrane-spanning segment. Topologically, residues 101–110 (TLVQDSKAQN) are cytoplasmic. The helical transmembrane segment at 111–131 (FLMSLIVLGIVIGVLRRLLIF) threads the bilayer. Topologically, residues 132–168 (LHLKRDRRFLKHTVNEILHITSALEQKFGMEYKCDST) are extracellular. A helical transmembrane segment spans residues 169 to 189 (LLVVYLAKLWILTVMLDSLWY). Over 190 to 277 (KPYFLSSIFL…RDNVSWLSTS (88 aa)) the chain is Cytoplasmic. Residues 278–298 (VYLMIFTCIFNAELLIECSLF) form a helical membrane-spanning segment. The Extracellular segment spans residues 299-306 (AGDELENK). The chain crosses the membrane as a helical span at residues 307 to 327 (IYIITDGCLGPVCVPILYVLI). Over 328–396 (LGMCTDRFRD…IILDITCDRE (69 aa)) the chain is Cytoplasmic. Residues 397–417 (FVMDYIVTVILTALSLVQYTI) traverse the membrane as a helical segment. The Extracellular segment spans residues 418–430 (STGGNISECVTHK). Asparagine 422 carries an N-linked (GlcNAc...) asparagine glycan.

The protein resides in the cell membrane. In Drosophila melanogaster (Fruit fly), this protein is Gustatory receptor-like 43a.